Here is a 24-residue protein sequence, read N- to C-terminus: Humanin-like 3 (24 aa).

The protein belongs to the humanin family. As to expression, highly expressed in testis. Also expressed in kidney, heart, skeletal muscles and brain.

The protein localises to the secreted. The protein resides in the cytoplasm. Its function is as follows. Plays a role as a neuroprotective and antiapoptotic factor. This chain is Humanin-like 3, found in Homo sapiens (Human).